We begin with the raw amino-acid sequence, 346 residues long: Probable electron transfer flavoprotein subunit alpha, mitochondrial (346 aa).

285-313 (LYVAIGISGAIQHLAGMKESKMIIAINKD) is a binding site for FAD.

This sequence belongs to the ETF alpha-subunit/FixB family. In terms of assembly, heterodimer of an alpha and a beta subunit. Requires FAD as cofactor.

It localises to the mitochondrion matrix. Its function is as follows. The electron transfer flavoprotein serves as a specific electron acceptor for several dehydrogenases, including five acyl-CoA dehydrogenases, glutaryl-CoA and sarcosine dehydrogenase. It transfers the electrons to the main mitochondrial respiratory chain via ETF-ubiquinone oxidoreductase (ETF dehydrogenase). This is Probable electron transfer flavoprotein subunit alpha, mitochondrial (ETF1) from Cryptococcus gattii serotype B (strain WM276 / ATCC MYA-4071) (Filobasidiella gattii).